A 459-amino-acid chain; its full sequence is Putrescine aminotransferase (459 aa).

Pyridoxal 5'-phosphate is bound by residues 150 to 151 (GT) and glutamine 274. Lysine 300 is modified (N6-(pyridoxal phosphate)lysine). Threonine 332 is a binding site for pyridoxal 5'-phosphate.

It belongs to the class-III pyridoxal-phosphate-dependent aminotransferase family. Putrescine aminotransferase subfamily. The cofactor is pyridoxal 5'-phosphate.

It catalyses the reaction an alkane-alpha,omega-diamine + 2-oxoglutarate = an omega-aminoaldehyde + L-glutamate. The catalysed reaction is putrescine + 2-oxoglutarate = 1-pyrroline + L-glutamate + H2O. It carries out the reaction cadaverine + 2-oxoglutarate = 5-aminopentanal + L-glutamate. It participates in amine and polyamine degradation; putrescine degradation; 4-aminobutanal from putrescine (transaminase route): step 1/1. Its function is as follows. Catalyzes the aminotransferase reaction from putrescine to 2-oxoglutarate, leading to glutamate and 4-aminobutanal, which spontaneously cyclizes to form 1-pyrroline. This is the first step in one of two pathways for putrescine degradation, where putrescine is converted into 4-aminobutanoate (gamma-aminobutyrate or GABA) via 4-aminobutanal. Also functions as a cadaverine transaminase in a a L-lysine degradation pathway to succinate that proceeds via cadaverine, glutarate and L-2-hydroxyglutarate. The polypeptide is Putrescine aminotransferase (Salmonella agona (strain SL483)).